Consider the following 248-residue polypeptide: Aspartate/glutamate leucyltransferase (248 aa).

It belongs to the R-transferase family. Bpt subfamily.

It is found in the cytoplasm. It catalyses the reaction N-terminal L-glutamyl-[protein] + L-leucyl-tRNA(Leu) = N-terminal L-leucyl-L-glutamyl-[protein] + tRNA(Leu) + H(+). The catalysed reaction is N-terminal L-aspartyl-[protein] + L-leucyl-tRNA(Leu) = N-terminal L-leucyl-L-aspartyl-[protein] + tRNA(Leu) + H(+). Functionally, functions in the N-end rule pathway of protein degradation where it conjugates Leu from its aminoacyl-tRNA to the N-termini of proteins containing an N-terminal aspartate or glutamate. This is Aspartate/glutamate leucyltransferase from Methylobacterium sp. (strain 4-46).